The sequence spans 308 residues: Lipoyl synthase 2 (308 aa).

7 residues coordinate [4Fe-4S] cluster: cysteine 49, cysteine 54, cysteine 60, cysteine 75, cysteine 79, cysteine 82, and serine 300. The Radical SAM core domain occupies 61-289 (YASGTATFLL…KRIAEGLGFK (229 aa)).

The protein belongs to the radical SAM superfamily. Lipoyl synthase family. Requires [4Fe-4S] cluster as cofactor.

The protein localises to the cytoplasm. The catalysed reaction is [[Fe-S] cluster scaffold protein carrying a second [4Fe-4S](2+) cluster] + N(6)-octanoyl-L-lysyl-[protein] + 2 oxidized [2Fe-2S]-[ferredoxin] + 2 S-adenosyl-L-methionine + 4 H(+) = [[Fe-S] cluster scaffold protein] + N(6)-[(R)-dihydrolipoyl]-L-lysyl-[protein] + 4 Fe(3+) + 2 hydrogen sulfide + 2 5'-deoxyadenosine + 2 L-methionine + 2 reduced [2Fe-2S]-[ferredoxin]. It participates in protein modification; protein lipoylation via endogenous pathway; protein N(6)-(lipoyl)lysine from octanoyl-[acyl-carrier-protein]: step 2/2. In terms of biological role, catalyzes the radical-mediated insertion of two sulfur atoms into the C-6 and C-8 positions of the octanoyl moiety bound to the lipoyl domains of lipoate-dependent enzymes, thereby converting the octanoylated domains into lipoylated derivatives. This Prochlorococcus marinus (strain SARG / CCMP1375 / SS120) protein is Lipoyl synthase 2.